Here is a 101-residue protein sequence, read N- to C-terminus: Small ribosomal subunit protein bS6 (101 aa).

It belongs to the bacterial ribosomal protein bS6 family.

Its function is as follows. Binds together with bS18 to 16S ribosomal RNA. The protein is Small ribosomal subunit protein bS6 of Pseudarthrobacter chlorophenolicus (strain ATCC 700700 / DSM 12829 / CIP 107037 / JCM 12360 / KCTC 9906 / NCIMB 13794 / A6) (Arthrobacter chlorophenolicus).